Reading from the N-terminus, the 178-residue chain is Large ribosomal subunit protein uL6 (178 aa).

This sequence belongs to the universal ribosomal protein uL6 family. Part of the 50S ribosomal subunit.

This protein binds to the 23S rRNA, and is important in its secondary structure. It is located near the subunit interface in the base of the L7/L12 stalk, and near the tRNA binding site of the peptidyltransferase center. The protein is Large ribosomal subunit protein uL6 of Leuconostoc mesenteroides subsp. mesenteroides (strain ATCC 8293 / DSM 20343 / BCRC 11652 / CCM 1803 / JCM 6124 / NCDO 523 / NBRC 100496 / NCIMB 8023 / NCTC 12954 / NRRL B-1118 / 37Y).